The primary structure comprises 615 residues: Chaperone protein DnaK (615 aa).

Position 195 is a phosphothreonine; by autocatalysis (Thr195). Residues 592-615 (EKGAQAASGKGPDDVIDADYKPAD) form a disordered region.

Belongs to the heat shock protein 70 family.

Acts as a chaperone. This chain is Chaperone protein DnaK, found in Thermus thermophilus (strain ATCC BAA-163 / DSM 7039 / HB27).